The chain runs to 287 residues: tRNA-cytidine(32) 2-sulfurtransferase (287 aa).

Residues 58 to 63 (SGGKDS) carry the PP-loop motif motif. The [4Fe-4S] cluster site is built by C133, C136, and C224.

The protein belongs to the TtcA family. As to quaternary structure, homodimer. Requires Mg(2+) as cofactor. [4Fe-4S] cluster is required as a cofactor.

It is found in the cytoplasm. The catalysed reaction is cytidine(32) in tRNA + S-sulfanyl-L-cysteinyl-[cysteine desulfurase] + AH2 + ATP = 2-thiocytidine(32) in tRNA + L-cysteinyl-[cysteine desulfurase] + A + AMP + diphosphate + H(+). Its pathway is tRNA modification. Catalyzes the ATP-dependent 2-thiolation of cytidine in position 32 of tRNA, to form 2-thiocytidine (s(2)C32). The sulfur atoms are provided by the cysteine/cysteine desulfurase (IscS) system. The protein is tRNA-cytidine(32) 2-sulfurtransferase of Dinoroseobacter shibae (strain DSM 16493 / NCIMB 14021 / DFL 12).